The chain runs to 182 residues: UPF0149 protein CGSHiEE_07975 (182 aa).

This sequence belongs to the UPF0149 family.

The sequence is that of UPF0149 protein CGSHiEE_07975 from Haemophilus influenzae (strain PittEE).